Reading from the N-terminus, the 317-residue chain is Melanocyte-stimulating hormone receptor (317 aa).

At 1–37 the chain is on the extracellular side; it reads MPVLGSQRRLLGSLNCTPPATFPLTLAPNRTGPQCLE. Asn29 is a glycosylation site (N-linked (GlcNAc...) asparagine). A helical membrane pass occupies residues 38-63; that stretch reads VAIPDGLFLSLGLVSLVENVLVVAAI. Residues 64–72 are Cytoplasmic-facing; sequence AKNRNLQSP. The chain crosses the membrane as a helical span at residues 73–93; that stretch reads MYYFICCLAMSDLLVSVSNVL. Residues 94–118 are Extracellular-facing; it reads ETAVMLLLEAGALAARAAVVQQLDN. A helical membrane pass occupies residues 119 to 140; the sequence is VIDVLICGSMVSSLCFLGAIAV. The Cytoplasmic portion of the chain corresponds to 141–163; it reads DRYISIFYALRYHSVVTLPRAWR. Residues 164–183 form a helical membrane-spanning segment; sequence IIAAIWVASILTSLLFITYY. Topologically, residues 184–191 are extracellular; that stretch reads NHTVVLLC. The chain crosses the membrane as a helical span at residues 192–211; sequence LVGFFIAMLALMAVLYVHML. Over 212 to 240 the chain is Cytoplasmic; sequence ARACQHARGIARLQKRQRPIHQGFGLKGA. Residues 241–266 traverse the membrane as a helical segment; sequence ATLTILLGVFFLCWGPFFLHLSLIVL. Over 267-279 the chain is Extracellular; the sequence is CPQHPTCGCIFKN. The chain crosses the membrane as a helical span at residues 280-300; that stretch reads FNLFLALIICNAIVDPLIYAF. Residues 301-317 are Cytoplasmic-facing; the sequence is RSQELRKTLQEVLQCSW. Cys315 carries S-palmitoyl cysteine lipidation.

The protein belongs to the G-protein coupled receptor 1 family. As to quaternary structure, interacts with MGRN1, but does not undergo MGRN1-mediated ubiquitination; this interaction competes with GNAS-binding and thus inhibits agonist-induced cAMP production. Interacts with OPN3; the interaction results in a decrease in MC1R-mediated cAMP signaling and ultimately a decrease in melanin production in melanocytes.

Its subcellular location is the cell membrane. Its function is as follows. Receptor for MSH (alpha, beta and gamma) and ACTH. The activity of this receptor is mediated by G proteins which activate adenylate cyclase. Mediates melanogenesis, the production of eumelanin (black/brown) and phaeomelanin (red/yellow), via regulation of cAMP signaling in melanocytes. The sequence is that of Melanocyte-stimulating hormone receptor (MC1R) from Cervus elaphus (Red deer).